The chain runs to 1341 residues: Restriction of telomere capping protein 1 (1341 aa).

The interval 1 to 39 (MSLSPHVENASIPKGSTPIPKNRNVSSIGKGEFLGSSSS) is disordered. 6 WD repeats span residues 207 to 248 (NKFS…SIDN), 256 to 296 (EHTR…SKSS), 305 to 342 (TASD…YKFA), 367 to 406 (AHTG…NAAE), 439 to 486 (NTGY…IPKH), and 489 to 527 (LSET…TVLE). 5 disordered regions span residues 559–593 (PELQ…IGGI), 600–619 (TGLT…GPTF), 630–651 (ASSF…ENRE), 736–765 (KNAT…DDDD), and 789–830 (NEKV…DRAR). Positions 630 to 644 (ASSFNSSSASLTSLT) are enriched in low complexity. Residues 753–765 (DDGDDDDDDDDDD) show a composition bias toward acidic residues. Positions 814–823 (SSISSISASR) are enriched in low complexity. The stretch at 843–883 (KIQTLVDLISIATHNASVYLSIDDLTNFKIWILIRDSLLWD) is one WD 7 repeat. Disordered stretches follow at residues 941-962 (AFRA…KLKE) and 1013-1043 (DEHE…KSIP). 2 stretches are compositionally biased toward basic and acidic residues: residues 951–962 (DAEKKPVSKLKE) and 1015–1027 (HEHQ…HDSP). Ser1036, Ser1080, Ser1087, Ser1089, Ser1123, and Ser1133 each carry phosphoserine. WD repeat units lie at residues 1129-1169 (SRPD…KQLY) and 1216-1255 (LFGI…LITN). An RING-type; degenerate zinc finger spans residues 1293–1335 (CVLCERPLKKLTMVILPCGHEGHFQCIQEWFLDENEQECPGGC).

This sequence belongs to the WD repeat RTC1 family. In terms of assembly, component of the SEA complex composed of at least IML1/SEA1, RTC1/SEA2, MTC5/SEA3, NPR2, NPR3, SEA4, SEC13 and SEH1. Interacts with ribosomes.

It is found in the vacuole membrane. Functionally, component of the SEA complex which coats the vacuolar membrane and is involved in intracellular trafficking, autophagy, response to nitrogen starvation, and amino acid biogenesis. May be involved in a process influencing telomere capping. The sequence is that of Restriction of telomere capping protein 1 (RTC1) from Saccharomyces cerevisiae (strain ATCC 204508 / S288c) (Baker's yeast).